We begin with the raw amino-acid sequence, 203 residues long: Galactoside O-acetyltransferase (203 aa).

Positions 17, 71, 85, and 93 each coordinate substrate. Asn85 lines the acetyl-CoA pocket. The Proton donor/acceptor role is filled by His115. Acetyl-CoA-binding positions include Ser142, Ala160, 165-166, Arg180, and Arg183; that span reads TK.

Belongs to the transferase hexapeptide repeat family. As to quaternary structure, homotrimer. In terms of processing, the N-terminus of this protein is heterogeneous because the initiator methionine is only partially cleaved.

The protein localises to the cytoplasm. The enzyme catalyses a beta-D-galactoside + acetyl-CoA = a 6-acetyl-beta-D-galactoside + CoA. Functionally, catalyzes the CoA-dependent transfer of an acetyl group to the 6-O-methyl position of a range of galactosides, glucosides, and lactosides. May assist cellular detoxification by acetylating non-metabolizable pyranosides, thereby preventing their reentry into the cell. The chain is Galactoside O-acetyltransferase (lacA) from Escherichia coli (strain K12).